An 822-amino-acid chain; its full sequence is Valine--tRNA ligase (822 aa).

Positions 41–51 match the 'HIGH' region motif; that stretch reads PNVTGQLHLGH. A 'KMSKS' region motif is present at residues 511–515; the sequence is KMSKS. Lys514 contributes to the ATP binding site. Residues 765-822 adopt a coiled-coil conformation; the sequence is EQKGRELKEIQFLKSEILRAEKILTNKGFLEKAPREKIDLERTKLEKLKEKLAFYEKK.

It belongs to the class-I aminoacyl-tRNA synthetase family. ValS type 1 subfamily. Monomer.

The protein resides in the cytoplasm. It catalyses the reaction tRNA(Val) + L-valine + ATP = L-valyl-tRNA(Val) + AMP + diphosphate. Catalyzes the attachment of valine to tRNA(Val). As ValRS can inadvertently accommodate and process structurally similar amino acids such as threonine, to avoid such errors, it has a 'posttransfer' editing activity that hydrolyzes mischarged Thr-tRNA(Val) in a tRNA-dependent manner. This Mesomycoplasma hyopneumoniae (strain 7448) (Mycoplasma hyopneumoniae) protein is Valine--tRNA ligase.